A 244-amino-acid chain; its full sequence is L-xylulose reductase (244 aa).

M1 is modified (N-acetylmethionine). 11–39 contributes to the NADP(+) binding site; that stretch reads LVTGAGKGIGRSIVKALHAAGARVVAVSR. R21 carries the post-translational modification Omega-N-methylarginine. S46 carries the phosphoserine modification. Residue S136 participates in substrate binding. Residue Y149 is the Proton acceptor of the active site. K153 is a catalytic residue.

This sequence belongs to the short-chain dehydrogenases/reductases (SDR) family. In terms of assembly, homotetramer.

It localises to the membrane. The enzyme catalyses xylitol + NADP(+) = L-xylulose + NADPH + H(+). Functionally, catalyzes the NADPH-dependent reduction of several pentoses, tetroses, trioses, alpha-dicarbonyl compounds and L-xylulose. Participates in the uronate cycle of glucose metabolism. May play a role in the water absorption and cellular osmoregulation in the proximal renal tubules by producing xylitol, an osmolyte, thereby preventing osmolytic stress from occurring in the renal tubules. The polypeptide is L-xylulose reductase (DCXR) (Bos taurus (Bovine)).